The following is a 414-amino-acid chain: Serine/arginine-rich splicing factor SR45 (414 aa).

Disordered regions lie at residues 1–95 (MAKP…KAVQ) and 175–414 (LPPR…PRKT). Composition is skewed to low complexity over residues 10 to 34 (SPSV…SRSI) and 42 to 60 (RSLS…GSRS). Positions 62–69 (PRRGKSPA) match the Nuclear localization signal 1 motif. Serine 77 carries the post-translational modification Phosphoserine. The RRM domain occupies 98–176 (LVLHVDSLSR…KVVKATFTLP (79 aa)). A compositionally biased stretch (low complexity) spans 176-191 (PPRQKVSSPPKPVSAA). Positions 205–220 (DAEKDGGPRRPRETSP) are enriched in basic and acidic residues. A required for isoform 1 function in petal development region spans residues 218 to 219 (TS). The segment covering 228–243 (PRRRSPLPRRGLSPRR) has biased composition (basic residues). The short motif at 229-236 (RRRSPLPR) is the Nuclear localization signal 2 element. Serine 256 is modified (phosphoserine). Short sequence motifs (nuclear localization signal) lie at residues 284 to 291 (PRRYRSPP), 318 to 325 (PRRLRSPP), and 338 to 345 (IRRPGRSR). 2 stretches are compositionally biased toward basic residues: residues 285-343 (RRYR…RPGR) and 352-363 (RKGRGPAGRRGR). Positions 364–373 (SSSYSSSPSP) are enriched in low complexity. A Nuclear localization signal 6 motif is present at residues 373 to 380 (PRRIPRKI). A compositionally biased stretch (basic residues) spans 375–394 (RIPRKISRSRSPKRPLRGKR). Positions 404–414 (SPPPPPPPRKT) are enriched in pro residues.

This sequence belongs to the splicing factor SR family. SR45 subfamily. In terms of assembly, component of the spliceosome. Interacts with AFC2, U2AF35A, U2AF35B, RNU1, SCL33 and SKIP. The interaction with AFC2 depends on phosphorylation status. Interaction with RNU1 defines initial 5' splice sites and interaction with U2AF35B 3' splice sites in the early stage of spliceosome assembly. Phosphorylated by AFC2. The phosphorylation status regulates intranuclear distribution. Especially present in actively growing regions and dividing cells. Mostly expressed in roots (primary and secondary root meristem), shoot apical meristem (SAM), leaf primordia, pollen and inflorescence, and, to a lower extent, in leaves, vascular tissue, hydathode and fruits.

Its subcellular location is the nucleus speckle. The protein resides in the nucleus. It localises to the nucleoplasm. Involved in 5' and 3' splicing site selection of introns, and may bridge the 5' and 3' components of the spliceosome. Isoform 1 is required during flower petal development and isoform 2 is involved in root growth. Negatively regulates glucose and abscisic acid (ABA) signaling during early seedling development. Involved in the RNA-directed DNA methylation pathway. Modulates KIN10 stability in response to sugars, probably through the splicing regulation of 5PTASE13, a protein implicated in the proteasomal degradation of KIN10. This chain is Serine/arginine-rich splicing factor SR45, found in Arabidopsis thaliana (Mouse-ear cress).